Consider the following 60-residue polypeptide: MSDKTVTVEQIGSPIRRPFDQEATLVGLGLNKRHRRSTLKDTPAVRGMIAKVAHLVRVVE.

The protein belongs to the universal ribosomal protein uL30 family. As to quaternary structure, part of the 50S ribosomal subunit.

The sequence is that of Large ribosomal subunit protein uL30 from Xanthobacter autotrophicus (strain ATCC BAA-1158 / Py2).